We begin with the raw amino-acid sequence, 706 residues long: Ribosomal RNA large subunit methyltransferase K/L (706 aa).

The 112-residue stretch at 43–154 folds into the THUMP domain; the sequence is LMYQSLLWSR…RDMASVALDL (112 aa).

It belongs to the methyltransferase superfamily. RlmKL family.

The protein resides in the cytoplasm. It catalyses the reaction guanosine(2445) in 23S rRNA + S-adenosyl-L-methionine = N(2)-methylguanosine(2445) in 23S rRNA + S-adenosyl-L-homocysteine + H(+). The enzyme catalyses guanosine(2069) in 23S rRNA + S-adenosyl-L-methionine = N(2)-methylguanosine(2069) in 23S rRNA + S-adenosyl-L-homocysteine + H(+). Functionally, specifically methylates the guanine in position 2445 (m2G2445) and the guanine in position 2069 (m7G2069) of 23S rRNA. The chain is Ribosomal RNA large subunit methyltransferase K/L from Yersinia pestis (strain Pestoides F).